Reading from the N-terminus, the 575-residue chain is Aspartate--tRNA ligase (575 aa).

Glu169 serves as a coordination point for L-aspartate. The tract at residues 193-196 (QLFK) is aspartate. Position 215 (Arg215) interacts with L-aspartate. Residues 215–217 (RDE) and Gln224 contribute to the ATP site. His438 contacts L-aspartate. Glu472 lines the ATP pocket. Position 479 (Arg479) interacts with L-aspartate. 524 to 527 (GLDR) lines the ATP pocket.

This sequence belongs to the class-II aminoacyl-tRNA synthetase family. Type 1 subfamily. In terms of assembly, homodimer.

It is found in the cytoplasm. The catalysed reaction is tRNA(Asp) + L-aspartate + ATP = L-aspartyl-tRNA(Asp) + AMP + diphosphate. Catalyzes the attachment of L-aspartate to tRNA(Asp) in a two-step reaction: L-aspartate is first activated by ATP to form Asp-AMP and then transferred to the acceptor end of tRNA(Asp). The protein is Aspartate--tRNA ligase of Mycoplasma capricolum subsp. capricolum (strain California kid / ATCC 27343 / NCTC 10154).